The primary structure comprises 522 residues: Probable protein kinase UbiB (522 aa).

The Protein kinase domain occupies 119 to 497 (SFERVPVASA…QRRTNRLLQS (379 aa)). Residues 125–133 (VASASIAQV) and lysine 151 each bind ATP. Aspartate 286 (proton acceptor) is an active-site residue. The chain crosses the membrane as a helical span at residues 496–516 (QSIIYGGMGFVLGLLALQFLI).

This sequence belongs to the ABC1 family. UbiB subfamily.

Its subcellular location is the cell inner membrane. Its pathway is cofactor biosynthesis; ubiquinone biosynthesis [regulation]. Its function is as follows. Is probably a protein kinase regulator of UbiI activity which is involved in aerobic coenzyme Q (ubiquinone) biosynthesis. The polypeptide is Probable protein kinase UbiB (Paracidovorax citrulli (strain AAC00-1) (Acidovorax citrulli)).